A 721-amino-acid polypeptide reads, in one-letter code: Fatty acid oxidation complex subunit alpha (721 aa).

The segment at 1–190 (MIYEGKAITV…KVGAVDAVVA (190 aa)) is enoyl-CoA hydratase/isomerase. Position 297 (aspartate 297) interacts with substrate. Residues 312 to 721 (KDVKQAAVLG…SFFGQASSEE (410 aa)) are 3-hydroxyacyl-CoA dehydrogenase. NAD(+) contacts are provided by residues methionine 325, aspartate 344, 401–403 (VVE), lysine 408, and serine 430. The For 3-hydroxyacyl-CoA dehydrogenase activity role is filled by histidine 451. Asparagine 454 lines the NAD(+) pocket. Residues asparagine 501 and tyrosine 660 each coordinate substrate.

In the N-terminal section; belongs to the enoyl-CoA hydratase/isomerase family. It in the C-terminal section; belongs to the 3-hydroxyacyl-CoA dehydrogenase family. In terms of assembly, heterotetramer of two alpha chains (FadB) and two beta chains (FadA).

It carries out the reaction a (3S)-3-hydroxyacyl-CoA + NAD(+) = a 3-oxoacyl-CoA + NADH + H(+). It catalyses the reaction a (3S)-3-hydroxyacyl-CoA = a (2E)-enoyl-CoA + H2O. The enzyme catalyses a 4-saturated-(3S)-3-hydroxyacyl-CoA = a (3E)-enoyl-CoA + H2O. The catalysed reaction is (3S)-3-hydroxybutanoyl-CoA = (3R)-3-hydroxybutanoyl-CoA. It carries out the reaction a (3Z)-enoyl-CoA = a 4-saturated (2E)-enoyl-CoA. It catalyses the reaction a (3E)-enoyl-CoA = a 4-saturated (2E)-enoyl-CoA. Its pathway is lipid metabolism; fatty acid beta-oxidation. Its function is as follows. Involved in the aerobic and anaerobic degradation of long-chain fatty acids via beta-oxidation cycle. Catalyzes the formation of 3-oxoacyl-CoA from enoyl-CoA via L-3-hydroxyacyl-CoA. It can also use D-3-hydroxyacyl-CoA and cis-3-enoyl-CoA as substrate. The protein is Fatty acid oxidation complex subunit alpha of Pseudomonas savastanoi pv. phaseolicola (strain 1448A / Race 6) (Pseudomonas syringae pv. phaseolicola (strain 1448A / Race 6)).